We begin with the raw amino-acid sequence, 66 residues long: Large ribosomal subunit protein bL33c (66 aa).

This sequence belongs to the bacterial ribosomal protein bL33 family.

The protein localises to the plastid. It is found in the chloroplast. This chain is Large ribosomal subunit protein bL33c, found in Nandina domestica (Heavenly bamboo).